Consider the following 300-residue polypeptide: 4-hydroxy-tetrahydrodipicolinate synthase (300 aa).

A pyruvate-binding site is contributed by Thr45. Tyr140 serves as the catalytic Proton donor/acceptor. Lys169 functions as the Schiff-base intermediate with substrate in the catalytic mechanism. Ile210 lines the pyruvate pocket.

The protein belongs to the DapA family. As to quaternary structure, homotetramer; dimer of dimers.

The protein resides in the cytoplasm. The catalysed reaction is L-aspartate 4-semialdehyde + pyruvate = (2S,4S)-4-hydroxy-2,3,4,5-tetrahydrodipicolinate + H2O + H(+). The protein operates within amino-acid biosynthesis; L-lysine biosynthesis via DAP pathway; (S)-tetrahydrodipicolinate from L-aspartate: step 3/4. Catalyzes the condensation of (S)-aspartate-beta-semialdehyde [(S)-ASA] and pyruvate to 4-hydroxy-tetrahydrodipicolinate (HTPA). The chain is 4-hydroxy-tetrahydrodipicolinate synthase from Helicobacter pylori (strain J99 / ATCC 700824) (Campylobacter pylori J99).